The primary structure comprises 378 residues: MRIGMICPYSFDVPGGVQSHVLQLAEVMRTRGHLVSVLAPASPHAALPDYFVSGGRAVPIPYNGSVARLRFGPATHRKVKKWLAHGDFDVLHLHEPNAPSLSMLALNIAEGPIVATFHTSTTKSLTLTVFQGILRPMHEKIVGRIAVSDLARRWQMEALGSDAVEIPNGVDVDSFASAARLDGYPRQGKTVLFLGRYDEPRKGMAVLLDALPKVVQRFPDVQLLIVGHGDADQLRGQAGRLAAHLRFLGQVDDAGKASAMRSADVYCAPNTGGESFGIVLVEAMAAGTAVVASDLDAFRRVLRDGEVGHLVPVDPPDLQAAALADGLIAVLENDVLRERYVAAGNAAVRRYDWSVVASQIMRVYETVAGSGAKVQVAS.

Residues Y9 and G16 each coordinate GDP-alpha-D-mannose. A 1,2-diacyl-sn-glycero-3-phospho-(1D-myo-inositol) is bound by residues Q18, 62 to 63, and R68; that span reads YN. Residues R196, 201–202, 251–253, K256, 274–278, and E282 each bind GDP-alpha-D-mannose; these read RK, VDD, and ESFGI.

It belongs to the glycosyltransferase group 1 family. As to quaternary structure, monomer. It depends on Mg(2+) as a cofactor.

It is found in the cell membrane. It carries out the reaction a 1,2-diacyl-sn-glycero-3-phospho-(1D-myo-inositol) + GDP-alpha-D-mannose = a 1,2-diacyl-sn-glycero-3-phospho-[alpha-D-mannopyranosyl-(1&lt;-&gt;6)-D-myo-inositol] + GDP + H(+). The protein operates within phospholipid metabolism; phosphatidylinositol metabolism. Involved in the biosynthesis of phosphatidyl-myo-inositol mannosides (PIM) which are early precursors in the biosynthesis of lipomannans (LM) and lipoarabinomannans (LAM). Catalyzes the addition of a mannosyl residue from GDP-D-mannose (GDP-Man) to the position 2 of the carrier lipid phosphatidyl-myo-inositol (PI) to generate a phosphatidyl-myo-inositol bearing an alpha-1,2-linked mannose residue (PIM1). The protein is Phosphatidyl-myo-inositol mannosyltransferase of Mycobacterium bovis (strain ATCC BAA-935 / AF2122/97).